The primary structure comprises 77 residues: Secapin (77 aa).

The N-terminal stretch at 1-32 (MKNYSKNATHLITVLLFSFVVILLIIPSKCEA) is a signal peptide. The propeptide occupies 33-52 (VSNDMQPLEARSADLVPEPR). A disulfide bond links cysteine 61 and cysteine 72.

The protein belongs to the secapin family. Expressed by the venom gland.

It localises to the secreted. In terms of biological role, serine protease inhibitor which exhibits antifibrinolytic, antielastolytic and antimicrobial activities. Displays antimicrobial activity against bacteria and fungi. Likely functions in the innate immune response to microbial infection and possibly in the venom, as an antifibrinolytic agent. Not toxic to mice but does induce slight sedation at higher doses (from 40 mg/kg). At a dose of 80 mg/kg, sedation occurs 15 minutes after injection and is accompanied by piloerection and hypothermia. The chain is Secapin from Apis mellifera (Honeybee).